The primary structure comprises 488 residues: Aspartyl/glutamyl-tRNA(Asn/Gln) amidotransferase subunit B (488 aa).

The protein belongs to the GatB/GatE family. GatB subfamily. Heterotrimer of A, B and C subunits.

It carries out the reaction L-glutamyl-tRNA(Gln) + L-glutamine + ATP + H2O = L-glutaminyl-tRNA(Gln) + L-glutamate + ADP + phosphate + H(+). The enzyme catalyses L-aspartyl-tRNA(Asn) + L-glutamine + ATP + H2O = L-asparaginyl-tRNA(Asn) + L-glutamate + ADP + phosphate + 2 H(+). In terms of biological role, allows the formation of correctly charged Asn-tRNA(Asn) or Gln-tRNA(Gln) through the transamidation of misacylated Asp-tRNA(Asn) or Glu-tRNA(Gln) in organisms which lack either or both of asparaginyl-tRNA or glutaminyl-tRNA synthetases. The reaction takes place in the presence of glutamine and ATP through an activated phospho-Asp-tRNA(Asn) or phospho-Glu-tRNA(Gln). This Ralstonia pickettii (strain 12J) protein is Aspartyl/glutamyl-tRNA(Asn/Gln) amidotransferase subunit B.